Reading from the N-terminus, the 216-residue chain is Triosephosphate isomerase (216 aa).

Position 7–9 (7–9 (NLK)) interacts with substrate. Catalysis depends on histidine 89, which acts as the Electrophile. Glutamate 137 functions as the Proton acceptor in the catalytic mechanism. Substrate is bound by residues isoleucine 142, glycine 175, and 196–197 (AS).

The protein belongs to the triosephosphate isomerase family. Homotetramer; dimer of dimers.

The protein localises to the cytoplasm. The catalysed reaction is D-glyceraldehyde 3-phosphate = dihydroxyacetone phosphate. Its pathway is carbohydrate biosynthesis; gluconeogenesis. It participates in carbohydrate degradation; glycolysis; D-glyceraldehyde 3-phosphate from glycerone phosphate: step 1/1. Functionally, involved in the gluconeogenesis. Catalyzes stereospecifically the conversion of dihydroxyacetone phosphate (DHAP) to D-glyceraldehyde-3-phosphate (G3P). The polypeptide is Triosephosphate isomerase (Thermoplasma acidophilum (strain ATCC 25905 / DSM 1728 / JCM 9062 / NBRC 15155 / AMRC-C165)).